The following is a 276-amino-acid chain: Shikimate dehydrogenase (NADP(+)) (276 aa).

Residues 14–16 (SKS) and Thr61 contribute to the shikimate site. Lys65 (proton acceptor) is an active-site residue. Asp77 is a binding site for NADP(+). Shikimate contacts are provided by Asn86 and Asp102. NADP(+) is bound by residues 127-131 (GAGGA), 151-156 (NRTPDK), and Met214. Tyr216 serves as a coordination point for shikimate. Gly238 contributes to the NADP(+) binding site.

The protein belongs to the shikimate dehydrogenase family. Homodimer.

It catalyses the reaction shikimate + NADP(+) = 3-dehydroshikimate + NADPH + H(+). It functions in the pathway metabolic intermediate biosynthesis; chorismate biosynthesis; chorismate from D-erythrose 4-phosphate and phosphoenolpyruvate: step 4/7. Its function is as follows. Involved in the biosynthesis of the chorismate, which leads to the biosynthesis of aromatic amino acids. Catalyzes the reversible NADPH linked reduction of 3-dehydroshikimate (DHSA) to yield shikimate (SA). In Nitrosomonas europaea (strain ATCC 19718 / CIP 103999 / KCTC 2705 / NBRC 14298), this protein is Shikimate dehydrogenase (NADP(+)).